Consider the following 56-residue polypeptide: Large ribosomal subunit protein eL24 (56 aa).

Positions 6, 9, 32, and 36 each coordinate Zn(2+). A C4-type zinc finger spans residues 6-36; the sequence is CSFCNTRITPGTGKLYAKKDGTVYYFCSSKC.

This sequence belongs to the eukaryotic ribosomal protein eL24 family. Part of the 50S ribosomal subunit. Forms a cluster with proteins L3 and L14. The cofactor is Zn(2+).

Its function is as follows. Binds to the 23S rRNA. The polypeptide is Large ribosomal subunit protein eL24 (Methanothrix thermoacetophila (strain DSM 6194 / JCM 14653 / NBRC 101360 / PT) (Methanosaeta thermophila)).